The primary structure comprises 460 residues: N-lysine methyltransferase setd6 (460 aa).

The SET domain maps to 28-265 (ESVQLTLSDK…KGEEVFNTYG (238 aa)).

This sequence belongs to the class V-like SAM-binding methyltransferase superfamily. Histone-lysine methyltransferase family. SETD6 subfamily.

Its subcellular location is the nucleus. Functionally, protein-lysine N-methyltransferase. The polypeptide is N-lysine methyltransferase setd6 (setd6) (Danio rerio (Zebrafish)).